The chain runs to 282 residues: Large ribosomal subunit protein uL2c (282 aa).

The interval Ser-230–Leu-261 is disordered.

The protein belongs to the universal ribosomal protein uL2 family. Part of the 50S ribosomal subunit.

The protein resides in the plastid. The chain is Large ribosomal subunit protein uL2c (rpl2) from Helicosporidium sp. subsp. Simulium jonesii (Green alga).